The following is a 438-amino-acid chain: 3-phosphoshikimate 1-carboxyvinyltransferase (438 aa).

Positions 23, 24, and 28 each coordinate 3-phosphoshikimate. A phosphoenolpyruvate-binding site is contributed by Lys23. 2 residues coordinate phosphoenolpyruvate: Gly94 and Arg122. Residues Ser167, Gln169, Asp321, and Lys348 each coordinate 3-phosphoshikimate. Gln169 provides a ligand contact to phosphoenolpyruvate. The Proton acceptor role is filled by Asp321. 2 residues coordinate phosphoenolpyruvate: Arg352 and Arg393.

Belongs to the EPSP synthase family. Monomer.

The protein resides in the cytoplasm. It carries out the reaction 3-phosphoshikimate + phosphoenolpyruvate = 5-O-(1-carboxyvinyl)-3-phosphoshikimate + phosphate. It functions in the pathway metabolic intermediate biosynthesis; chorismate biosynthesis; chorismate from D-erythrose 4-phosphate and phosphoenolpyruvate: step 6/7. Its function is as follows. Catalyzes the transfer of the enolpyruvyl moiety of phosphoenolpyruvate (PEP) to the 5-hydroxyl of shikimate-3-phosphate (S3P) to produce enolpyruvyl shikimate-3-phosphate and inorganic phosphate. In Helicobacter hepaticus (strain ATCC 51449 / 3B1), this protein is 3-phosphoshikimate 1-carboxyvinyltransferase.